Here is a 285-residue protein sequence, read N- to C-terminus: Acetyl-coenzyme A carboxylase carboxyl transferase subunit beta (285 aa).

Residues 29–285 form the CoA carboxyltransferase N-terminal domain; that stretch reads IMTKCPKCKK…ILKIHQEVTK (257 aa). Positions 33, 36, 52, and 55 each coordinate Zn(2+). The C4-type zinc-finger motif lies at 33-55; it reads CPKCKKIMYTKELAENLNVCFNC.

It belongs to the AccD/PCCB family. Acetyl-CoA carboxylase is a heterohexamer composed of biotin carboxyl carrier protein (AccB), biotin carboxylase (AccC) and two subunits each of ACCase subunit alpha (AccA) and ACCase subunit beta (AccD). It depends on Zn(2+) as a cofactor.

Its subcellular location is the cytoplasm. The enzyme catalyses N(6)-carboxybiotinyl-L-lysyl-[protein] + acetyl-CoA = N(6)-biotinyl-L-lysyl-[protein] + malonyl-CoA. The protein operates within lipid metabolism; malonyl-CoA biosynthesis; malonyl-CoA from acetyl-CoA: step 1/1. Functionally, component of the acetyl coenzyme A carboxylase (ACC) complex. Biotin carboxylase (BC) catalyzes the carboxylation of biotin on its carrier protein (BCCP) and then the CO(2) group is transferred by the transcarboxylase to acetyl-CoA to form malonyl-CoA. The protein is Acetyl-coenzyme A carboxylase carboxyl transferase subunit beta of Staphylococcus aureus (strain MSSA476).